A 266-amino-acid chain; its full sequence is Large ribosomal subunit protein uL3 (266 aa).

The disordered stretch occupies residues 124–149 (NQKIGPKSHGGGGGSKPVRQTGSLGD).

It belongs to the universal ribosomal protein uL3 family. Part of the 50S ribosomal subunit. Forms a cluster with proteins L14 and L19.

Functionally, one of the primary rRNA binding proteins, it binds directly near the 3'-end of the 23S rRNA, where it nucleates assembly of the 50S subunit. This chain is Large ribosomal subunit protein uL3, found in Mycoplasmopsis pulmonis (strain UAB CTIP) (Mycoplasma pulmonis).